Here is a 201-residue protein sequence, read N- to C-terminus: Lipopolysaccharide core heptose(II)-phosphate phosphatase (201 aa).

An N-terminal signal peptide occupies residues 1–35 (MLAFTLRFIKNKRYFAILAGALVIIAGLTSQHAWS).

Belongs to the phosphoglycerate mutase family. Ais subfamily.

The protein localises to the periplasm. The protein operates within bacterial outer membrane biogenesis; lipopolysaccharide metabolism. Its function is as follows. Catalyzes the dephosphorylation of heptose(II) of the outer membrane lipopolysaccharide core. The polypeptide is Lipopolysaccharide core heptose(II)-phosphate phosphatase (Salmonella enteritidis PT4 (strain P125109)).